The sequence spans 511 residues: Maturase K (511 aa).

It belongs to the intron maturase 2 family. MatK subfamily.

The protein localises to the plastid. It localises to the chloroplast. Functionally, usually encoded in the trnK tRNA gene intron. Probably assists in splicing its own and other chloroplast group II introns. The chain is Maturase K from Brachypodium sylvaticum (False brome).